The primary structure comprises 201 residues: Ras-related protein Rab-1B (201 aa).

N-acetylmethionine is present on methionine 1. Residues serine 17, glycine 18, valine 19, glycine 20, lysine 21, serine 22, cysteine 23, tyrosine 33, threonine 34, glutamate 35, serine 36, serine 39, and threonine 40 each coordinate GTP. Mg(2+) is bound at residue serine 22. Residues 30–45 (DDTYTESYISTIGVDF) carry the Switch 1 motif. Residues threonine 40 and aspartate 63 each coordinate Mg(2+). The switch 2 region; required for interaction with REP1/CHM stretch occupies residues 64-83 (TAGQERFRTITSSYYRGAHG). A Switch 2 motif is present at residues 65–80 (AGQERFRTITSSYYRG). The GTP site is built by glycine 66, asparagine 121, lysine 122, aspartate 124, serine 151, alanine 152, and lysine 153. The interval 174–201 (GPGAASGGERPNLKIDSTPVKPASGGCC) is disordered. 2 S-geranylgeranyl cysteine lipidation sites follow: cysteine 200 and cysteine 201. Cysteine 201 is modified (cysteine methyl ester).

Belongs to the small GTPase superfamily. Rab family. As to quaternary structure, interacts with MICAL1 and MICAL2. Interacts (GTP-bound form) with MICALCL, MICAL1 and MILCAL3. Interacts with GDI1; the interaction requires the GDP-bound state. Interacts with CHM/REP1; the interaction requires the GDP-bound form and is necessary for prenylation by GGTase II. Interacts with RabGAP TBC1D20. Interacts (in GDP-bound form) with lipid phosphatase MTMR6 (via GRAM domain); the interaction regulates MTMR6 recruitment to the endoplasmic reticulum-Golgi intermediate compartment. Interacts (in GDP-bound form) with lipid phosphatase MTMR7. It depends on Mg(2+) as a cofactor. Prenylated; by GGTase II, only after interaction of the substrate with Rab escort protein 1 (REP1).

It localises to the cytoplasm. The protein localises to the membrane. The protein resides in the preautophagosomal structure membrane. It is found in the perinuclear region. The catalysed reaction is GTP + H2O = GDP + phosphate + H(+). Its activity is regulated as follows. Regulated by guanine nucleotide exchange factors (GEFs) which promote the exchange of bound GDP for free GTP. Regulated by GTPase activating proteins (GAPs) including TBC1D20 which increases the GTP hydrolysis activity. Inhibited by GDP dissociation inhibitors (GDIs). Its function is as follows. The small GTPases Rab are key regulators of intracellular membrane trafficking, from the formation of transport vesicles to their fusion with membranes. Rabs cycle between an inactive GDP-bound form and an active GTP-bound form that is able to recruit to membranes different set of downstream effectors directly responsible for vesicle formation, movement, tethering and fusion. Plays a role in the initial events of the autophagic vacuole development which take place at specialized regions of the endoplasmic reticulum. Regulates vesicular transport between the endoplasmic reticulum and successive Golgi compartments. Required to modulate the compacted morphology of the Golgi. Promotes the recruitment of lipid phosphatase MTMR6 to the endoplasmic reticulum-Golgi intermediate compartment. The chain is Ras-related protein Rab-1B (Rab1b) from Mus musculus (Mouse).